Here is a 435-residue protein sequence, read N- to C-terminus: GTPase Der (435 aa).

2 consecutive EngA-type G domains span residues 4–167 and 175–350; these read KIVA…SKND and TKIA…QSLS. GTP contacts are provided by residues 10–17, 57–61, 119–122, 181–188, 228–232, and 293–296; these read GKPNVGKS, DTGGI, NKYD, DTAGI, and NKWD. One can recognise a KH-like domain in the interval 351–435; it reads VKVKTYVLNE…PINLIFRERK (85 aa).

The protein belongs to the TRAFAC class TrmE-Era-EngA-EngB-Septin-like GTPase superfamily. EngA (Der) GTPase family. Associates with the 50S ribosomal subunit.

Its function is as follows. GTPase that plays an essential role in the late steps of ribosome biogenesis. The protein is GTPase Der of Mycoplasma capricolum subsp. capricolum (strain California kid / ATCC 27343 / NCTC 10154).